The following is a 144-amino-acid chain: Large ribosomal subunit protein uL15 (144 aa).

A disordered region spans residues 20–49 (GRGIGSGLGKTGGRGHKGQKSRSGGFHKVG). Over residues 21 to 31 (RGIGSGLGKTG) the composition is skewed to gly residues.

This sequence belongs to the universal ribosomal protein uL15 family. In terms of assembly, part of the 50S ribosomal subunit.

In terms of biological role, binds to the 23S rRNA. This Neisseria meningitidis serogroup C (strain 053442) protein is Large ribosomal subunit protein uL15.